Reading from the N-terminus, the 217-residue chain is Protein-L-isoaspartate O-methyltransferase (217 aa).

Residue S65 is part of the active site.

Belongs to the methyltransferase superfamily. L-isoaspartyl/D-aspartyl protein methyltransferase family.

The protein resides in the cytoplasm. The catalysed reaction is [protein]-L-isoaspartate + S-adenosyl-L-methionine = [protein]-L-isoaspartate alpha-methyl ester + S-adenosyl-L-homocysteine. Functionally, catalyzes the methyl esterification of L-isoaspartyl residues in peptides and proteins that result from spontaneous decomposition of normal L-aspartyl and L-asparaginyl residues. It plays a role in the repair and/or degradation of damaged proteins. The sequence is that of Protein-L-isoaspartate O-methyltransferase from Methanoregula boonei (strain DSM 21154 / JCM 14090 / 6A8).